A 119-amino-acid chain; its full sequence is DNA-binding protein inhibitor ID-3 (119 aa).

In terms of domain architecture, bHLH spans 28–80 (RGKSPSAEEPLSLLDDMNHCYSRLRELVPGVPRGTQLSQVEILQRVIDYILDL).

As to quaternary structure, homodimer, and heterodimer with other HLH proteins. Interacts with COPS5 and COPS7A. Interacts with IFI204. Interacts with GATA4 and NKX2-5. Interacts with ANKRD2; both proteins cooperate in myoblast differentiation. Interacts with CLOCK and BMAL1. In terms of processing, phosphorylated in vitro by CDC2 and PKC.

It localises to the nucleus. In terms of biological role, transcriptional regulator (lacking a basic DNA binding domain) which negatively regulates the basic helix-loop-helix (bHLH) transcription factors by forming heterodimers and inhibiting their DNA binding and transcriptional activity. Implicated in regulating a variety of cellular processes, including cellular growth, senescence, differentiation, apoptosis, angiogenesis, and neoplastic transformation. Involved in myogenesis by inhibiting skeletal muscle and cardiac myocyte differentiation and promoting muscle precursor cells proliferation. Inhibits the binding of E2A-containing protein complexes to muscle creatine kinase E-box enhancer. Regulates the circadian clock by repressing the transcriptional activator activity of the CLOCK-BMAL1 heterodimer. The protein is DNA-binding protein inhibitor ID-3 (Id3) of Rattus norvegicus (Rat).